The sequence spans 559 residues: Potassium-transporting ATPase potassium-binding subunit (559 aa).

The next 12 helical transmembrane spans lie at 5–25 (GFLL…PLGM), 63–83 (LLAI…LLML), 131–151 (VGLT…VFAL), 173–193 (ITLW…IQQG), 254–274 (VQML…GEVV), 282–302 (AILW…MWAE), 327–347 (FGIL…CGAV), 356–376 (ALGG…FGGV), 379–399 (GLYG…LMVG), 416–436 (MIAL…ALAM), 483–503 (LLLA…VMAI), and 525–545 (ALFI…TFIP).

This sequence belongs to the KdpA family. The system is composed of three essential subunits: KdpA, KdpB and KdpC.

The protein resides in the cell inner membrane. In terms of biological role, part of the high-affinity ATP-driven potassium transport (or Kdp) system, which catalyzes the hydrolysis of ATP coupled with the electrogenic transport of potassium into the cytoplasm. This subunit binds the periplasmic potassium ions and delivers the ions to the membrane domain of KdpB through an intramembrane tunnel. The polypeptide is Potassium-transporting ATPase potassium-binding subunit (Klebsiella pneumoniae subsp. pneumoniae (strain ATCC 700721 / MGH 78578)).